The following is a 398-amino-acid chain: Beta-1,6-galactosyltransferase GALT29A (398 aa).

The Cytoplasmic segment spans residues 1–6 (MKRSVR). The chain crosses the membrane as a helical; Signal-anchor for type II membrane protein span at residues 7–27 (PLFSALLFAFFAATLICRVAI). Residues 28–398 (RRSSFSFASA…FKIPLVQVYH (371 aa)) lie on the Lumenal side of the membrane. N-linked (GlcNAc...) asparagine glycosylation is found at Asn-221 and Asn-346.

Belongs to the glycosyltransferase 29 family. In terms of assembly, interacts with GALT31A.

It is found in the golgi apparatus membrane. Its function is as follows. Galactosyltransferase involved in the biosynthesis of type II arabinogalactan. Possesses galactosyltransferase (GalT) activity in vitro, transferring galactose from UDP-galactose to a mixture of various oligosaccharides derived from arabinogalactan proteins. Forms a complex with GALT31A that can work cooperatively to enhance the activities of adding galactose residues at O6 positions to beta-1,6-galactan and beta-1,3-galactan. The sequence is that of Beta-1,6-galactosyltransferase GALT29A from Arabidopsis thaliana (Mouse-ear cress).